A 683-amino-acid polypeptide reads, in one-letter code: Amino acid transporter heavy chain SLC3A1 (683 aa).

Basic and acidic residues predominate over residues 1-10 (MNEDKDKRDS). Residues 1 to 50 (MNEDKDKRDSIQMSMKGCRTNNGFVQNEDIQEQDPDSRDTPQSNAVSIPA) form a disordered region. Over 1–86 (MNEDKDKRDS…ARYRVPREIL (86 aa)) the chain is Cytoplasmic. S10 is subject to Phosphoserine. Residues 87 to 107 (FWLTVVSVFLLIGATIAIIII) traverse the membrane as a helical; Signal-anchor for type II membrane protein segment. Residues 108-683 (SPKCLDWWQA…SVLDLLYSSC (576 aa)) are Extracellular-facing. N211 contributes to the Ca(2+) binding site. 3 N-linked (GlcNAc...) asparagine glycosylation sites follow: N211, N238, and N258. A disulfide bridge links C239 with C270. D281, F315, L316, and E318 together coordinate Ca(2+). N329 is a glycosylation site (N-linked (GlcNAc...) asparagine). S383 carries the post-translational modification Phosphoserine. Residues N510, N520, and N574 are each glycosylated (N-linked (GlcNAc...) asparagine). 2 disulfide bridges follow: C568–C664 and C671–C683.

In terms of assembly, disulfide-linked heterodimer composed of the catalytic light subunit SLC7A9 and the heavy subunit SLC3A1. The heterodimer is the minimal functional unit. Assembles in non-covalently linked heterotetramers (dimers of heterodimers) and higher order oligomers; the oligomerization is mediated by SLC3A1 likely to prevent degradation in the endoplasmic reticulum and facilitate heteromer trafficking to the plasma membrane. Disulfide-linked heterodimer composed of the catalytic light subunit SLC7A13 and the heavy subunit SLC3A1. As to expression, predominantly expressed in kidney and intestine. In kidney localized to the apical membrane of the proximal tubules.

It localises to the cell membrane. The protein resides in the apical cell membrane. Its function is as follows. Acts as a chaperone that facilitates biogenesis and trafficking of functional transporter heteromers to the plasma membrane. Associates with SLC7A9 to form a functional transporter complex that mediates the electrogenic exchange between cationic amino acids and neutral amino acids, with a stoichiometry of 1:1. SLC7A9-SLC3A1 transporter has system b(0,+)-like activity with high affinity for extracellular cationic amino acids and L-cystine and lower affinity for intracellular neutral amino acids. Substrate exchange is driven by high concentration of intracellular neutral amino acids and the intracellular reduction of L-cystine to L-cysteine. SLC7A9-SLC3A1 acts as a major transporter for reabsorption of L-cystine and dibasic amino acids across the brush border membrane in early proximal tubules. Associates with SLC7A13 to form a functional complex that transports anionic and neutral amino acids via exchange or facilitated diffusion. SLC7A13-SLC3A1 may act as a major transporter for L-cystine in late proximal tubules, ensuring its reabsorption from the luminal fluid in exchange for cytosolic L-glutamate or L-aspartate. In Rattus norvegicus (Rat), this protein is Amino acid transporter heavy chain SLC3A1 (Slc3a1).